We begin with the raw amino-acid sequence, 365 residues long: Baculoviral IAP repeat-containing protein 7 (365 aa).

2 BIR repeats span residues R7–Q73 and R115–L180. Zn(2+)-binding residues include C149, C152, H169, and C176. The self-inhibits the anti-apoptotic function stretch occupies residues A186 to A234. Position 198 is a phosphoserine (S198). Position 202 is a phosphoserine; by MAPK1 (S202). Position 212 is a phosphoserine (S212). A phosphoserine; by MAPK1 mark is found at S216 and S219. Positions T278–E306 are disordered. The span at T288–K297 shows a compositional bias: basic and acidic residues. Residues C318–R353 form an RING-type zinc finger.

The protein belongs to the IAP family. Post-translationally, auto-ubiquitinated, and degraded in a 2-step mechanism; a caspase-independent first step and a caspase-dependent second step. In terms of processing, phosphorylated via MAPK-dependent and CDK-dependent pathways during oocyte maturation. Phosphorylation does not appear to affect caspase inhibition or autoubiquitination activity.

It localises to the cytoplasm. The enzyme catalyses S-ubiquitinyl-[E2 ubiquitin-conjugating enzyme]-L-cysteine + [acceptor protein]-L-lysine = [E2 ubiquitin-conjugating enzyme]-L-cysteine + N(6)-ubiquitinyl-[acceptor protein]-L-lysine.. In terms of biological role, weak apoptotic suppressor. Has E3 ubiquitin-protein ligase activity. Weak inhibitor of caspase activity. This is Baculoviral IAP repeat-containing protein 7 (birc7) from Xenopus tropicalis (Western clawed frog).